A 296-amino-acid polypeptide reads, in one-letter code: tRNA dimethylallyltransferase (296 aa).

An ATP-binding site is contributed by 8–15 (GPTGSGKT). Residue 10–15 (TGSGKT) participates in substrate binding. The interaction with substrate tRNA stretch occupies residues 32-35 (DSRQ).

Belongs to the IPP transferase family. As to quaternary structure, monomer. It depends on Mg(2+) as a cofactor.

The enzyme catalyses adenosine(37) in tRNA + dimethylallyl diphosphate = N(6)-dimethylallyladenosine(37) in tRNA + diphosphate. In terms of biological role, catalyzes the transfer of a dimethylallyl group onto the adenine at position 37 in tRNAs that read codons beginning with uridine, leading to the formation of N6-(dimethylallyl)adenosine (i(6)A). The protein is tRNA dimethylallyltransferase of Leptospira biflexa serovar Patoc (strain Patoc 1 / Ames).